A 432-amino-acid chain; its full sequence is Alcohol acyltransferase 9 (432 aa).

Catalysis depends on proton acceptor residues His-156 and Asp-379.

It belongs to the plant acyltransferase family.

It catalyses the reaction 2-(methylsulfanyl)acetyl-CoA + butan-1-ol = butyl 2-(methylsulfanyl)acetate + CoA. It carries out the reaction ethanol + acetyl-CoA = ethyl acetate + CoA. The enzyme catalyses butan-1-ol + acetyl-CoA = butyl acetate + CoA. The catalysed reaction is butan-1-ol + propanoyl-CoA = butyl propanoate + CoA. Involved in the biosynthesis of volatile esters which confer kiwifruit flavor. Alcohol acyl transferase that can use a wide range of alcohols as substrate to produce esters. Exhibits acetyl-CoA:alcohol O-acyltransferase activity. The polypeptide is Alcohol acyltransferase 9 (Actinidia chinensis var. chinensis (Chinese soft-hair kiwi)).